The chain runs to 666 residues: DNA mismatch repair protein MutL (666 aa).

The protein belongs to the DNA mismatch repair MutL/HexB family.

Functionally, this protein is involved in the repair of mismatches in DNA. It is required for dam-dependent methyl-directed DNA mismatch repair. May act as a 'molecular matchmaker', a protein that promotes the formation of a stable complex between two or more DNA-binding proteins in an ATP-dependent manner without itself being part of a final effector complex. The chain is DNA mismatch repair protein MutL from Clostridium botulinum (strain Langeland / NCTC 10281 / Type F).